Consider the following 183-residue polypeptide: Peptide deformylase-like (183 aa).

The active site involves Glu140.

Belongs to the polypeptide deformylase family.

This chain is Peptide deformylase-like, found in Rickettsia conorii (strain ATCC VR-613 / Malish 7).